Reading from the N-terminus, the 446-residue chain is Chromosomal replication initiator protein DnaA (446 aa).

The segment at 1 to 82 (MENILDLWNQ…ELSIKFVIPQ (82 aa)) is domain I, interacts with DnaA modulators. The segment at 83–103 (NQDVEDFMPKPQVKKAVKEDT) is domain II. The tract at residues 104-332 (SDFPQNMLNP…VAYSSLINKD (229 aa)) is domain III, AAA+ region. ATP contacts are provided by glycine 154, leucine 155, glycine 156, lysine 157, and threonine 158. Threonine 158 contacts Mg(2+). An Initiator specific motif (ISM) motif is present at residues 182 to 206 (SEKFTNEFINSIRDNKAVDFRNRYR). Residues aspartate 214 and aspartate 215 each coordinate Mg(2+). Residues 333–346 (INADLAAEALKDII) are linker. A domain IV, binds dsDNA region spans residues 347–446 (PSSKPKVITI…HVKEIKEQLK (100 aa)).

It belongs to the DnaA family. In terms of assembly, the DNA replisome assembles sequentially on oriC in this order; DnaA, DnaD, DnaB, DnaI-DnaC helicase. Oligomerizes as a right-handed, spiral filament on DNA at oriC. Forms an ATP-dependent helix on DNA at oriC; both DnaD and YabA inhibit formation of the DnaA helix. Forms an ATP-dependent oligomer, formation is stimulated by ds- and ssDNA; monomeric ADP-Soj inhibits oligomer formation. Interacts with DnaD. Interacts with YabA, and via YabA, with the replication machinery subunit beta sliding clamp DnaN. Interacts with YabA via domain IIIa (residues 109-275). Isolated domain I forms a 1:1 complex with SirA. Interacts with Soj, probably via domain III. Interacts via domains I and III with CcrZ. Interacts via domain IV with skin prophage-like element protein YqaH.

Its subcellular location is the cytoplasm. The protein resides in the nucleoid. The enzyme catalyses ATP + H2O = ADP + phosphate + H(+). Oligomerization of DnaA can be controlled by Soj; monomeric ADP-Soj inhibits formation of the DnaA helix. YabA prevents the cooperative binding of DnaA-ATP to oriC-containing sequences; increased levels of DnaN (beta sliding clamp subunit of DNA polymerase) removes YabA from association with DnaA on the chromosome, enabling increased association of DnaA with its chromosomal binding sites. Both Soj and YabA chase DnaA from oriC site, YabA tethers DnaA to the DNA replication fork via the beta sliding clamp subunit DnaN. SirA antagonizes the ability of DnaA to bind to the replication origin, and thus decreases replication inititation during sporulation. Small protein YqaH, part of the skin prophage-like element, binds to DnaA and antagonizes its replication initiation and transcriptional regulation activities. In terms of biological role, plays an essential role in the initiation and regulation of chromosomal replication. ATP-DnaA binds to the origin of replication (oriC) to initiate formation of the DNA replication initiation complex once per cell cycle. Binds directly to oriC at a 9 bp consensus (DnaA box): 5'-TTATCCACA-3' and separates the double-stranded (ds)DNA. Forms a right-handed helical filament on oriC DNA; dsDNA binds to the exterior of the filament while single-stranded (ss)DNA is stabilized in the filament's interior. The ATP-DnaA-oriC complex binds and stabilizes one strand of the AT-rich DNA unwinding element (DUE or basal unwinding system, BUS), permitting loading of DNA polymerase. Binds ATP with high affinity, ADP with lower affinity, but not AMP, cAMP or cGMP; ATP stimulates binding to DnaA boxes. Once bound promotes sequence-specific strand separation of DnaA-trios (3'-GAT-5' consensus) adjacent to oriC in the presence of ATP but not ADP. Domains III and IV are sufficient to separate dsDNA strands. The 'initiator specific motif' (ISM) of domain III contacts the middle adenine residue of the DnaA-trio probably stretching and stabilizing ssDNA. DnaA-trio recognition is co-operative and depends on DnaA self-assembly. The ssDNA serves as an assembly region for the replication machinery. Tethered to DnaN (beta sliding clamp subunit of DNA polymerase) and thus replication forks by YabA. During replication initiation DnaA-ATP binds cooperatively to sequences in oriC. YabA prevents this cooperative binding while still allowing DnaA to bind DNA. During the cell cycle an initial phase occurs in which DnaA is associated with origin regions, then the origin regions become spatially separate from the centrally sequestered DnaA molecules, and most DnaA molecules are unable to reassociate with origin regions. Does not require YabA to bind DNA. During sporulation SirA prevents DnaA association with the replication origin to prevent excessive chromosome replication. Overexpression induces the SOS response; increasing expression of downstream dnaN blocks this induction. Over-initiation of DNA replication is very deleterious; isolated suppressors in relA, ndrR, dnaC, cshA and crrZ increase replication elongation, decrease replication inititation or lead to a decrease in the replicative DNA helicase. Binds acidic phospholipids. Functionally, the half-life of ADP-DnaA is 1.5 minutes, of ATP-DnaA is 5 minutes at 37 degrees Celsius; in E.coli the half-life of ADP-DnaA is about 45 minutes. Also acts as a transcriptional regulator. DnaA inhibits its own gene expression. DnaA binds specifically to the promoter regions of at least 20 operons (56 genes), including itself, sda and dnaB, and probably controls their expression in response to DNA replication inhibition. The chain is Chromosomal replication initiator protein DnaA from Bacillus subtilis (strain 168).